The sequence spans 217 residues: Small ribosomal subunit protein uS3 (217 aa).

A KH type-2 domain is found at 24 to 93 (IKEFLEYKLS…NPQIDVIDVS (70 aa)).

The protein belongs to the universal ribosomal protein uS3 family. Part of the 30S ribosomal subunit.

In terms of biological role, binds the lower part of the 30S subunit head. The sequence is that of Small ribosomal subunit protein uS3 from Pyrobaculum islandicum (strain DSM 4184 / JCM 9189 / GEO3).